The chain runs to 82 residues: Small ribosomal subunit protein bS16 (82 aa).

Belongs to the bacterial ribosomal protein bS16 family.

The polypeptide is Small ribosomal subunit protein bS16 (Synechocystis sp. (strain ATCC 27184 / PCC 6803 / Kazusa)).